A 486-amino-acid chain; its full sequence is Hematopoietic lineage cell-specific protein (486 aa).

The involved in HAX-1 binding stretch occupies residues 27 to 66 (FVNDISEKEQRWGAKTIEGSGRTEHINIHQLRNKVSEEHD). The residue at position 41 (Lys41) is an N6-acetyllysine. 3 Cortactin repeats span residues 79 to 115 (ASHG…SQTD), 116 to 152 (AAKG…SQKD), and 153 to 189 (YSRG…SQRD). Position 123 is an N6-acetyllysine (Lys123). Tyr140 bears the Phosphotyrosine mark. Residues 190–212 (YAKGFGGQYGIQKDRVDKSAVGF) form a Cortactin 4; truncated repeat. Position 192 is an N6-acetyllysine (Lys192). Phosphotyrosine is present on Tyr198. Tyr222 carries the phosphotyrosine; by FGR modification. Lys241 is modified (N6-acetyllysine). Residues 243-276 (ESMAEEKRKREEEEKAQQVARRQQERKAVTKRSP) are compositionally biased toward basic and acidic residues. The interval 243–419 (ESMAEEKRKR…SALAGSSGCP (177 aa)) is disordered. The residue at position 275 (Ser275) is a Phosphoserine. Residue Thr308 is modified to Phosphothreonine. Residues 315 to 324 (EPVRTSREHP) are compositionally biased toward basic and acidic residues. 2 stretches are compositionally biased toward acidic residues: residues 353–383 (QVEE…DVEE) and 390–405 (EDEP…EPED). 2 positions are modified to phosphotyrosine; by SYK and FES: Tyr378 and Tyr397. Residues 406 to 419 (SSFSSALAGSSGCP) are compositionally biased toward low complexity. Residues 428–486 (ALGISAVAVYDYQGEGSDELSFDPDDVITDIEMVDEGWWRGRCHGHFGLFPANYVKLLE) form the SH3 domain.

Associates with the SH2 and SH3 domains of LCK. Binding to he LCK SH3 domain occurs constitutively, while binding to the LCK SH2 domain occurs only upon TCR stimulation. A similar binding pattern was observed with LYN, but not with FYN in which the FYN SH2 region associates upon TCR stimulation but the FYN SH3 region does not associate regardless of TCR stimulation. Directly associates with HAX1, through binding to its C-terminal region. Interacts with HS1BP3. Interacts with FES/FPS. Interacts (via SH2 domain) with FGR. Forms a multiprotein complex with LYN and ANKRD54. Phosphorylated by FES. Phosphorylated by LYN, FYN and FGR after cross-linking of surface IgM on B-cells. Phosphorylation by LYN, FYN and FGR requires prior phosphorylation by SYK or FES. In terms of tissue distribution, expressed only in tissues and cells of hematopoietic origin.

The protein resides in the membrane. The protein localises to the cytoplasm. Its subcellular location is the mitochondrion. Functionally, substrate of the antigen receptor-coupled tyrosine kinase. Plays a role in antigen receptor signaling for both clonal expansion and deletion in lymphoid cells. May also be involved in the regulation of gene expression. The chain is Hematopoietic lineage cell-specific protein (HCLS1) from Homo sapiens (Human).